We begin with the raw amino-acid sequence, 250 residues long: Ribosomal RNA small subunit methyltransferase J (250 aa).

Residues 96–97 (RD) and aspartate 168 contribute to the S-adenosyl-L-methionine site.

The protein belongs to the methyltransferase superfamily. RsmJ family.

The protein localises to the cytoplasm. It catalyses the reaction guanosine(1516) in 16S rRNA + S-adenosyl-L-methionine = N(2)-methylguanosine(1516) in 16S rRNA + S-adenosyl-L-homocysteine + H(+). Specifically methylates the guanosine in position 1516 of 16S rRNA. The polypeptide is Ribosomal RNA small subunit methyltransferase J (Neisseria gonorrhoeae (strain ATCC 700825 / FA 1090)).